The chain runs to 219 residues: Thiopurine S-methyltransferase (219 aa).

The S-adenosyl-L-methionine site is built by W10, L45, E66, and R123.

It belongs to the class I-like SAM-binding methyltransferase superfamily. TPMT family.

It is found in the cytoplasm. The catalysed reaction is S-adenosyl-L-methionine + a thiopurine = S-adenosyl-L-homocysteine + a thiopurine S-methylether.. This Bordetella petrii (strain ATCC BAA-461 / DSM 12804 / CCUG 43448) protein is Thiopurine S-methyltransferase.